The following is a 91-amino-acid chain: uncharacterized protein (91 aa).

2 helical membrane-spanning segments follow: residues 10 to 30 (VLFTAPGLIVGALAIGAAGGI) and 46 to 66 (LLVAVLFVGAFTGIMVEQALS). Residues 68–91 (MRRQDGARGTARAGRNSARRRMPS) form a disordered region.

It localises to the cell membrane. This is an uncharacterized protein from Sinorhizobium fredii (strain NBRC 101917 / NGR234).